The primary structure comprises 1213 residues: MGKNREMRLTHICCCCLLYQLGFLSNGIVSELQFAPDREEWEVVFPALWRREPVDPAGGSGGSADPGWVRGVGGGGSARAQAAGSSREVRSVAPVPLEEPVEGRSESRLRPPPPSEGEEDEELESQELPRGSSGAAALSPGAPASWQPPPPPQPPPSPPPAQHAEPDGDEVLLRIPAFSRDLYLLLRRDGRFLAPRFAVEQRPNPGPGPTGAASAPQPPAPPDAGCFYTGAVLRHPGSLASFSTCGGGLMGFIQLNEDFIFIEPLNDTMAITGHPHRVYRQKRSMEEKVTEKSALHSHYCGIISDKGRPRSRKIAESGRGKRYSYKLPQEYNIETVVVADPAMVSYHGADAARRFILTILNMVFNLFQHKSLSVQVNLRVIKLILLHETPPELYIGHHGEKMLESFCKWQHEEFGKKNDIHLEMSTNWGEDMTSVDAAILITRKDFCVHKDEPCDTVGIAYLSGMCSEKRKCIIAEDNGLNLAFTIAHEMGHNMGINHDNDHPSCADGLHIMSGEWIKGQNLGDVSWSRCSKEDLERFLRSKASNCLLQTNPQSVNSVMVPSKLPGMTYTADEQCQILFGPLASFCQEMQHVICTGLWCKVEGEKECRTKLDPPMDGTDCDLGKWCKAGECTSRTSAPEHLAGEWSLWSPCSRTCSAGISSRERKCPGLDSEARDCNGPRKQYRICENPPCPAGLPGFRDWQCQAYSVRTSSPKHILQWQAVLDEEKPCALFCSPVGKEQPILLSEKVMDGTSCGYQGLDICANGRCQKVGCDGLLGSLAREDHCGVCNGNGKSCKIIKGDFNHTRGAGYVEVLVIPAGARRIKVVEEKPAHSYLALRDAGKQSINSDWKIEHSGAFNLAGTTVHYVRRGLWEKISAKGPTTAPLHLLVLLFQDQNYGLHYEYTIPSDPLPENQSSKAPEPLFMWTHTSWEDCDATCGGGERKTTVSCTKIMSKNISIVDNEKCKYLTKPEPQIRKCNEQPCQTRWMMTEWTPCSRTCGKGMQSRQVACTQQLSNGTLIRARERDCIGPKPASAQRCEGQDCMTVWEAGVWSECSVKCGKGIRHRTVRCTNPRKKCVLSTRPREAEDCEDYSKCYVWRMGDWSKCSITCGKGMQSRVIQCMHKITGRHGNECFSSEKPAAYRPCHLQPCNEKINVNTITSPRLAALTFKCLGDQWPVYCRVIREKNLCQDMRWYQRCCETCRDFYAQKLQQKS.

Residues 1 to 27 (MGKNREMRLTHICCCCLLYQLGFLSNG) form the signal peptide. The propeptide occupies 28–322 (IVSELQFAPD…KIAESGRGKR (295 aa)). Disordered regions lie at residues 49-161 (WRRE…PPPA) and 192-215 (FLAP…AASA). Positions 52–71 (EPVDPAGGSGGSADPGWVRG) are enriched in gly residues. Acidic residues predominate over residues 110–119 (RPPPPSEGEE). Low complexity predominate over residues 120-139 (DEELESQELPRGSSGAAALS). Positions 140-155 (PGAPASWQPPPPPQPP) are enriched in pro residues. Asn-266 is a glycosylation site (N-linked (GlcNAc...) asparagine). The Cysteine switch signature appears at 298-305 (HYCGIISD). Cys-300 serves as a coordination point for Zn(2+). The Peptidase M12B domain maps to 331-551 (YNIETVVVAD…KASNCLLQTN (221 aa)). Disulfide bonds link Cys-407-Cys-472, Cys-447-Cys-454, Cys-466-Cys-546, Cys-505-Cys-530, Cys-575-Cys-599, Cys-586-Cys-607, Cys-594-Cys-626, Cys-620-Cys-631, Cys-651-Cys-686, Cys-655-Cys-691, and Cys-666-Cys-676. His-488 serves as a coordination point for Zn(2+). Glu-489 is an active-site residue. The Zn(2+) site is built by His-492 and His-498. The region spanning 552–639 (PQSVNSVMVP…ECTSRTSAPE (88 aa)) is the Disintegrin domain. Positions 640–692 (HLAGEWSLWSPCSRTCSAGISSRERKCPGLDSEARDCNGPRKQYRICENPPCP) constitute a TSP type-1 1 domain. Residues 797–920 (IIKGDFNHTR…PENQSSKAPE (124 aa)) are spacer. Asn-803, Asn-913, Asn-955, and Asn-1015 each carry an N-linked (GlcNAc...) asparagine glycan. 4 consecutive TSP type-1 domains span residues 921–981 (PLFM…NEQP), 982–1043 (CQTR…QDCM), 1045–1089 (VWEA…EDCE), and 1093–1150 (KCYV…QPCN). 3 disulfide bridges follow: Cys-994–Cys-1037, Cys-998–Cys-1042, and Cys-1009–Cys-1026. The PLAC domain occupies 1166–1205 (LTFKCLGDQWPVYCRVIREKNLCQDMRWYQRCCETCRDFY).

Zn(2+) serves as cofactor. Post-translationally, the precursor is cleaved by a furin endopeptidase. Glycosylated. Can be O-fucosylated by POFUT2 on a serine or a threonine residue found within the consensus sequence C1-X(2)-(S/T)-C2-G of the TSP type-1 repeat domains where C1 and C2 are the first and second cysteine residue of the repeat, respectively. Fucosylated repeats can then be further glycosylated by the addition of a beta-1,3-glucose residue by the glucosyltransferase, B3GALTL. Fucosylation mediates the efficient secretion of ADAMTS family members. Can also be C-glycosylated with one or two mannose molecules on tryptophan residues within the consensus sequence W-X-X-W of the TPRs, and N-glycosylated. These other glycosylations can also facilitate secretion. Expressed in fetal lung, but not in any adult tissues examined. Expression was detected in an osteosarcoma cDNA library.

Its subcellular location is the secreted. It is found in the extracellular space. The protein resides in the extracellular matrix. This is A disintegrin and metalloproteinase with thrombospondin motifs 19 (ADAMTS19) from Homo sapiens (Human).